We begin with the raw amino-acid sequence, 350 residues long: Ion-translocating oxidoreductase complex subunit D (350 aa).

3 helical membrane-spanning segments follow: residues 20 to 39 (IMML…WYFF), 89 to 109 (IPPL…VIIA), and 123 to 143 (PAMI…TNWL). T187 is subject to FMN phosphoryl threonine. The next 5 membrane-spanning stretches (helical) occupy residues 215 to 235 (LAGL…LFLL), 244 to 264 (IPVS…LIAP), 267 to 287 (FLSP…FFIL), 301 to 321 (LVFG…GGYP), and 322 to 342 (DGVA…DYYT).

It belongs to the NqrB/RnfD family. The complex is composed of six subunits: RnfA, RnfB, RnfC, RnfD, RnfE and RnfG. It depends on FMN as a cofactor.

The protein localises to the cell inner membrane. Its function is as follows. Part of a membrane-bound complex that couples electron transfer with translocation of ions across the membrane. This chain is Ion-translocating oxidoreductase complex subunit D, found in Cronobacter sakazakii (strain ATCC BAA-894) (Enterobacter sakazakii).